The primary structure comprises 831 residues: Multiphosphoryl transfer protein (831 aa).

Residues 1-90 form the HPr domain; sequence MLTIQFLCPL…EYILVRFIDS (90 aa). His-15 (pros-phosphohistidine intermediate; for HPr activity) is an active-site residue. Residue His-15 is modified to Phosphohistidine; by EI. The tract at residues 119-650 is PTS EI; sequence GNVLASGVGV…AVKSQLRQLD (532 aa). His-298 (tele-phosphohistidine intermediate; for PTS EI activity) is an active-site residue. The residue at position 298 (His-298) is a Phosphohistidine; by autocatalysis. Phosphoenolpyruvate contacts are provided by Arg-405 and Arg-441. Mg(2+) is bound by residues Glu-540 and Asp-564. Residues 563–564 and Arg-574 contribute to the phosphoenolpyruvate site; that span reads ND. Cys-611 serves as the catalytic Proton donor; for EI activity. The 144-residue stretch at 685 to 828 folds into the PTS EIIA type-2 domain; the sequence is PLLALENIFV…QSILTLLETE (144 aa). His-747 functions as the Tele-phosphohistidine intermediate; for PTS EIIA activity in the catalytic mechanism. Residue His-747 is modified to Phosphohistidine; by HPr.

It belongs to the PEP-utilizing enzyme family. Mg(2+) is required as a cofactor.

The protein resides in the cytoplasm. It carries out the reaction L-histidyl-[protein] + phosphoenolpyruvate = N(pros)-phospho-L-histidyl-[protein] + pyruvate. It catalyses the reaction D-fructose(out) + N(pros)-phospho-L-histidyl-[protein] = D-fructose 1-phosphate(in) + L-histidyl-[protein]. Its function is as follows. Multifunctional protein that includes general (non sugar-specific) and sugar-specific components of the phosphoenolpyruvate-dependent sugar phosphotransferase system (sugar PTS). This major carbohydrate active transport system catalyzes the phosphorylation of incoming sugar substrates concomitantly with their translocation across the cell membrane. The enzyme II FryABC PTS system is involved in fructose transport. The sequence is that of Multiphosphoryl transfer protein (fryA) from Shigella flexneri.